The primary structure comprises 128 residues: NADPH-dependent 7-cyano-7-deazaguanine reductase (128 aa).

The Thioimide intermediate role is filled by cysteine 39. Aspartate 46 functions as the Proton donor in the catalytic mechanism. Substrate is bound by residues 61 to 63 (IEL) and 80 to 81 (HE).

The protein belongs to the GTP cyclohydrolase I family. QueF type 1 subfamily.

Its subcellular location is the cytoplasm. The catalysed reaction is 7-aminomethyl-7-carbaguanine + 2 NADP(+) = 7-cyano-7-deazaguanine + 2 NADPH + 3 H(+). It participates in tRNA modification; tRNA-queuosine biosynthesis. Catalyzes the NADPH-dependent reduction of 7-cyano-7-deazaguanine (preQ0) to 7-aminomethyl-7-deazaguanine (preQ1). The chain is NADPH-dependent 7-cyano-7-deazaguanine reductase from Magnetococcus marinus (strain ATCC BAA-1437 / JCM 17883 / MC-1).